The following is a 767-amino-acid chain: Probable ubiquitin carboxyl-terminal hydrolase creB (767 aa).

In terms of domain architecture, USP spans 49 to 462; the sequence is YGMENYGNTC…CAYVLFYQET (414 aa). Residue Cys58 is the Nucleophile of the active site. Disordered regions lie at residues 107–140 and 232–263; these read EAEA…DSPE and ASKQ…KTPN. Over residues 250–263 the composition is skewed to polar residues; it reads SVDQSSSTGSKTPN. His413 serves as the catalytic Proton acceptor. The tract at residues 490 to 767 is disordered; sequence LKQNGFPQSP…LRKKSFSILS (278 aa). 2 stretches are compositionally biased toward low complexity: residues 540–554 and 564–573; these read ESAP…SPLS and ERVTTVATPP. Residues 574-641 adopt a coiled-coil conformation; that stretch reads KNDALAKKER…ASKAEEDRRL (68 aa). Residues 577 to 650 show a composition bias toward basic and acidic residues; the sequence is ALAKKERARE…LSHENGKEKQ (74 aa). The span at 656–667 shows a compositional bias: basic residues; that stretch reads RLKRGSKSLSHR. A compositionally biased stretch (polar residues) spans 690–700; that stretch reads STLSQTGPTSE. A compositionally biased stretch (low complexity) spans 701–713; sequence QQQQQQQQQQQQQ. Positions 731-749 are enriched in basic and acidic residues; that stretch reads TIREDEQVNHKDSKHERTG. Over residues 750 to 767 the composition is skewed to basic residues; that stretch reads HGKWRSFSLRKKSFSILS.

It belongs to the peptidase C19 family. Interacts with creA, creC and qutD.

It carries out the reaction Thiol-dependent hydrolysis of ester, thioester, amide, peptide and isopeptide bonds formed by the C-terminal Gly of ubiquitin (a 76-residue protein attached to proteins as an intracellular targeting signal).. Ubiquitin thioesterase component of the regulatory network controlling carbon source utilization through ubiquitination and deubiquitination involving creA, creB, creC, creD and acrB. Deubiquitinates the creA catabolic repressor and the quinate permease qutD. Also plays a role in response to carbon starvation and the control of extracellular proteases activity. This chain is Probable ubiquitin carboxyl-terminal hydrolase creB (creB), found in Aspergillus fumigatus (strain CBS 144.89 / FGSC A1163 / CEA10) (Neosartorya fumigata).